Reading from the N-terminus, the 284-residue chain is MKIVLISGLSGSGKSVALRQMEDSGYFCVDNLPLEMLPALVSYHIERADETELAVSVDVRSGIDIGQAREQIASLRGLGHRVEVLFVEAEEAVLVRRFSETRRGHPLSNQDMTLLESLKKEREWLFPLKEIAYCIDTSKMNAQQLRHAVRQWLKVERTGLLVILEFFGFKYGVPNNADFMFDMRSLPNPYYDPELRPYTGMDKPVWDYLDGQPLVQEMVDDIERFVTHWLPRLEDESRSYVTVAIGCTGGQHRSVYVVEKLARRLKGRYELLIRHRQAQNLSDR.

ATP is bound at residue 8 to 15; the sequence is GLSGSGKS. A GTP-binding site is contributed by 58-61; it reads DVRS.

Belongs to the RapZ-like family.

Functionally, displays ATPase and GTPase activities. This chain is Nucleotide-binding protein NMC0691, found in Neisseria meningitidis serogroup C / serotype 2a (strain ATCC 700532 / DSM 15464 / FAM18).